A 295-amino-acid chain; its full sequence is 4-diphosphocytidyl-2-C-methyl-D-erythritol kinase (295 aa).

The active site involves K18. P101–S111 contacts ATP. The active site involves D143.

The protein belongs to the GHMP kinase family. IspE subfamily.

The enzyme catalyses 4-CDP-2-C-methyl-D-erythritol + ATP = 4-CDP-2-C-methyl-D-erythritol 2-phosphate + ADP + H(+). It functions in the pathway isoprenoid biosynthesis; isopentenyl diphosphate biosynthesis via DXP pathway; isopentenyl diphosphate from 1-deoxy-D-xylulose 5-phosphate: step 3/6. Functionally, catalyzes the phosphorylation of the position 2 hydroxy group of 4-diphosphocytidyl-2C-methyl-D-erythritol. The sequence is that of 4-diphosphocytidyl-2-C-methyl-D-erythritol kinase from Vibrio vulnificus (strain YJ016).